The chain runs to 339 residues: Spore coat polysaccharide biosynthesis protein SpsG (339 aa).

A helical membrane pass occupies residues 241–261; it reads IVAGGISLYEAICIGVPCLVL.

This sequence to M.jannaschii MJ1062.

The protein localises to the cell membrane. The protein operates within spore coat biogenesis; spore coat polysaccharide biosynthesis. The polypeptide is Spore coat polysaccharide biosynthesis protein SpsG (spsG) (Bacillus subtilis (strain 168)).